A 559-amino-acid chain; its full sequence is Polypeptide N-acetylgalactosaminyltransferase 1 (559 aa).

Over 1–8 the chain is Cytoplasmic; it reads MRKFAYCK. Residues 9–28 traverse the membrane as a helical; Signal-anchor for type II membrane protein segment; that stretch reads VVLATSLIWVLLDMFLLLYF. Residues 29 to 559 lie on the Lumenal side of the membrane; the sequence is SECNKCDEKK…LRNVTLPEIF (531 aa). The segment at 45 to 66 is disordered; sequence GDVLEPVQKPHEGPGEMGKPVV. N95 carries N-linked (GlcNAc...) asparagine glycosylation. 5 disulfide bridges follow: C106/C339, C330/C408, C442/C459, C482/C497, and C523/C540. The tract at residues 115 to 225 is catalytic subdomain A; the sequence is LPTTSVVIVF…VGWLEPLLAR (111 aa). D156 and R186 together coordinate substrate. Mn(2+) contacts are provided by D209 and H211. The interval 285–347 is catalytic subdomain B; the sequence is PVRTPTMAGG…TCSHVGHVFR (63 aa). W316 provides a ligand contact to substrate. Mn(2+) is bound at residue H344. The substrate site is built by R347 and Y352. In terms of domain architecture, Ricin B-type lectin spans 429-551; the sequence is SSLGEIRNVE…GSRSQQWLLR (123 aa). N552 is a glycosylation site (N-linked (GlcNAc...) asparagine).

It belongs to the glycosyltransferase 2 family. GalNAc-T subfamily. Requires Mn(2+) as cofactor.

The protein resides in the golgi apparatus. It is found in the golgi stack membrane. It localises to the secreted. It carries out the reaction L-seryl-[protein] + UDP-N-acetyl-alpha-D-galactosamine = a 3-O-[N-acetyl-alpha-D-galactosaminyl]-L-seryl-[protein] + UDP + H(+). The enzyme catalyses L-threonyl-[protein] + UDP-N-acetyl-alpha-D-galactosamine = a 3-O-[N-acetyl-alpha-D-galactosaminyl]-L-threonyl-[protein] + UDP + H(+). It functions in the pathway protein modification; protein glycosylation. Its function is as follows. Catalyzes the initial reaction in O-linked oligosaccharide biosynthesis, the transfer of an N-acetyl-D-galactosamine residue to a serine or threonine residue on the protein receptor. Has a broad spectrum of substrates such as apomucin-, MUC5AC-, MUC1- and MUC2-derived peptides. The protein is Polypeptide N-acetylgalactosaminyltransferase 1 of Sus scrofa (Pig).